A 220-amino-acid chain; its full sequence is uncharacterized protein (220 aa).

Residues M1–C25 form the signal peptide.

In terms of tissue distribution, nacreous layer of shell (at protein level). Expressed primarily in the mantle with highest level in the mantle pallium and lower level in the mantle edge.

The protein localises to the secreted. This is an uncharacterized protein from Margaritifera margaritifera (Freshwater pearl mussel).